The following is a 386-amino-acid chain: Agamous-like MADS-box protein AGL103 (386 aa).

The region spanning 29–76 (SSSRATSLIKRQQTVFKKAKELSILCDIDVCVICYGSNGELKTWPEER) is the MADS-box domain.

In terms of assembly, interacts with MEE14/CBP1.

Its subcellular location is the nucleus. Probable transcription factor that may function in the maintenance of the proper function of the central cell in pollen tube attraction. The polypeptide is Agamous-like MADS-box protein AGL103 (Arabidopsis thaliana (Mouse-ear cress)).